Reading from the N-terminus, the 474-residue chain is Dihydrolipoyl dehydrogenase (474 aa).

FAD contacts are provided by residues 39 to 47, K56, and A118; that span reads EKDAYGGTC. A disulfide bond links C47 and C52. NAD(+) contacts are provided by residues 186 to 190, E209, and 275 to 278; these read GGGYI and AVGR. FAD-binding residues include D318 and A326. The Proton acceptor role is filled by H450.

This sequence belongs to the class-I pyridine nucleotide-disulfide oxidoreductase family. In terms of assembly, homodimer. FAD is required as a cofactor.

It localises to the cytoplasm. The catalysed reaction is N(6)-[(R)-dihydrolipoyl]-L-lysyl-[protein] + NAD(+) = N(6)-[(R)-lipoyl]-L-lysyl-[protein] + NADH + H(+). This chain is Dihydrolipoyl dehydrogenase (lpdA), found in Halobacterium salinarum (strain ATCC 700922 / JCM 11081 / NRC-1) (Halobacterium halobium).